A 499-amino-acid polypeptide reads, in one-letter code: Probable cytosol aminopeptidase (499 aa).

Residues Lys269 and Asp274 each coordinate Mn(2+). Lys281 is a catalytic residue. Residues Asp292, Asp351, and Glu353 each coordinate Mn(2+). The active site involves Arg355.

It belongs to the peptidase M17 family. Requires Mn(2+) as cofactor.

It is found in the cytoplasm. The catalysed reaction is Release of an N-terminal amino acid, Xaa-|-Yaa-, in which Xaa is preferably Leu, but may be other amino acids including Pro although not Arg or Lys, and Yaa may be Pro. Amino acid amides and methyl esters are also readily hydrolyzed, but rates on arylamides are exceedingly low.. The enzyme catalyses Release of an N-terminal amino acid, preferentially leucine, but not glutamic or aspartic acids.. Functionally, presumably involved in the processing and regular turnover of intracellular proteins. Catalyzes the removal of unsubstituted N-terminal amino acids from various peptides. This chain is Probable cytosol aminopeptidase, found in Haemophilus ducreyi (strain 35000HP / ATCC 700724).